An 80-amino-acid chain; its full sequence is Ubiquitin-like protein NEDD8-like protein 2 (80 aa).

It belongs to the ubiquitin family.

In Dictyostelium discoideum (Social amoeba), this protein is Ubiquitin-like protein NEDD8-like protein 2 (nedd8l2).